The primary structure comprises 319 residues: HPr kinase/phosphorylase (319 aa).

Catalysis depends on residues histidine 141 and lysine 162. 156–163 (GNSGVGKS) lines the ATP pocket. Serine 163 contributes to the Mg(2+) binding site. The active-site Proton acceptor; for phosphorylation activity. Proton donor; for dephosphorylation activity is aspartate 180. The interval 204 to 213 (MEIRGIGIID) is important for the catalytic mechanism of both phosphorylation and dephosphorylation. Mg(2+) is bound at residue glutamate 205. The active site involves arginine 246. The tract at residues 267–272 (PVKVGR) is important for the catalytic mechanism of dephosphorylation.

It belongs to the HPrK/P family. As to quaternary structure, homohexamer. Requires Mg(2+) as cofactor.

The catalysed reaction is [HPr protein]-L-serine + ATP = [HPr protein]-O-phospho-L-serine + ADP + H(+). It catalyses the reaction [HPr protein]-O-phospho-L-serine + phosphate + H(+) = [HPr protein]-L-serine + diphosphate. Functionally, catalyzes the ATP- as well as the pyrophosphate-dependent phosphorylation of a specific serine residue in HPr, a phosphocarrier protein of the phosphoenolpyruvate-dependent sugar phosphotransferase system (PTS). HprK/P also catalyzes the pyrophosphate-producing, inorganic phosphate-dependent dephosphorylation (phosphorolysis) of seryl-phosphorylated HPr (P-Ser-HPr). The two antagonistic activities of HprK/P are regulated by several intracellular metabolites, which change their concentration in response to the absence or presence of rapidly metabolisable carbon sources (glucose, fructose, etc.) in the growth medium. Therefore, by controlling the phosphorylation state of HPr, HPrK/P is a sensor enzyme that plays a major role in the regulation of carbon metabolism and sugar transport: it mediates carbon catabolite repression (CCR), and regulates PTS-catalyzed carbohydrate uptake and inducer exclusion. The protein is HPr kinase/phosphorylase of Lactobacillus gasseri (strain ATCC 33323 / DSM 20243 / BCRC 14619 / CIP 102991 / JCM 1131 / KCTC 3163 / NCIMB 11718 / NCTC 13722 / AM63).